Consider the following 256-residue polypeptide: Sugar fermentation stimulation protein homolog (256 aa).

This sequence belongs to the SfsA family.

The polypeptide is Sugar fermentation stimulation protein homolog (Prochlorococcus marinus (strain MIT 9211)).